The primary structure comprises 355 residues: Tetraacyldisaccharide 4'-kinase (355 aa).

ATP is bound at residue 49-56; that stretch reads TAGGTGKT.

Belongs to the LpxK family.

It carries out the reaction a lipid A disaccharide + ATP = a lipid IVA + ADP + H(+). The protein operates within glycolipid biosynthesis; lipid IV(A) biosynthesis; lipid IV(A) from (3R)-3-hydroxytetradecanoyl-[acyl-carrier-protein] and UDP-N-acetyl-alpha-D-glucosamine: step 6/6. Functionally, transfers the gamma-phosphate of ATP to the 4'-position of a tetraacyldisaccharide 1-phosphate intermediate (termed DS-1-P) to form tetraacyldisaccharide 1,4'-bis-phosphate (lipid IVA). The sequence is that of Tetraacyldisaccharide 4'-kinase from Chlorobium luteolum (strain DSM 273 / BCRC 81028 / 2530) (Pelodictyon luteolum).